The chain runs to 428 residues: Arabinosyltransferase RRA2 (428 aa).

Over 1–15 (MAGRRDRIQQLRGSR) the chain is Cytoplasmic. A helical; Signal-anchor for type II membrane protein transmembrane segment spans residues 16 to 36 (IAIAIFVGILIGCVCSVLFPN). The Lumenal portion of the chain corresponds to 37-428 (GFFNSGSSLI…ALDSFPDGSD (392 aa)). Positions 250-252 (DVD) match the DXD motif motif. N-linked (GlcNAc...) asparagine glycosylation is present at Asn278.

Belongs to the glycosyltransferase 77 family. In terms of tissue distribution, expressed in roots, rosette and cauline leaves, stems, flowers and siliques.

Its subcellular location is the golgi apparatus membrane. Functionally, plays a role in the arabinosylation of cell wall components. Involved in the arabinosylation of extensin proteins in root hair cells. Extensins are structural glycoproteins present in cell walls and its arabinosylation is important for root hair cell development. The protein is Arabinosyltransferase RRA2 of Arabidopsis thaliana (Mouse-ear cress).